Consider the following 348-residue polypeptide: Protein RecA (348 aa).

Position 64-71 (64-71 (GPESSGKT)) interacts with ATP.

It belongs to the RecA family.

The protein localises to the cytoplasm. Can catalyze the hydrolysis of ATP in the presence of single-stranded DNA, the ATP-dependent uptake of single-stranded DNA by duplex DNA, and the ATP-dependent hybridization of homologous single-stranded DNAs. It interacts with LexA causing its activation and leading to its autocatalytic cleavage. The sequence is that of Protein RecA from Blastochloris viridis (Rhodopseudomonas viridis).